The sequence spans 623 residues: MTIRHLSETIINQIAAGEVIERPASVIKELVENAIDAGATRIEVVTAGGGKTLLRVTDNGSGIPADELALAVSRHCTSKLTDDVHDIRALGFRGEALPSIGSVSKLTLKSRPQDADSGFEVCVTGGHLDGPRPTALNRGTIVEVRDLFYATPARLKFMKTDRAEATAITDVVKRIGIAFPHIRFSLAGTDRTPFEMPATGTGAEATLERIGQVLGREFGENALAIDAERDGVRLAGFVGIPSFNRGNALHQFAYVNGRPVRDKQIFGALRGAYSDVIARDRHPVAVLFLTLDPALVDVNVHPAKADVRFRDPGLVRGLIVGAIKQALAQSGIRPATSGAEAMLQAFRAEGFGAQQSAPRPANSYSPASWRTAPPAPRSEWSPQTAHPAHRPLDLQAAPALRENGQAVLGDVAVPAADARASVAEAPVELMQKPLGAARAQIHENYIVAQTEDSLVIVDQHAAHERLVYEALKNALHARPIAGQMLLIPEIVDLPEEDAQRLAGHAETLARFGLGVEQFGPGAIAVRETPAMLGEMNVQQLIRDLADEIAEHDTADGLKAMLHHVAATMACHGSVRSGRRLKPEEMNALLRDMEATPGSGTCNHGRPTYIELKLTDIERLFGRR.

Residues 353 to 368 (AQQSAPRPANSYSPAS) show a composition bias toward polar residues. The interval 353–389 (AQQSAPRPANSYSPASWRTAPPAPRSEWSPQTAHPAH) is disordered.

This sequence belongs to the DNA mismatch repair MutL/HexB family.

Functionally, this protein is involved in the repair of mismatches in DNA. It is required for dam-dependent methyl-directed DNA mismatch repair. May act as a 'molecular matchmaker', a protein that promotes the formation of a stable complex between two or more DNA-binding proteins in an ATP-dependent manner without itself being part of a final effector complex. The polypeptide is DNA mismatch repair protein MutL (Brucella melitensis biotype 1 (strain ATCC 23456 / CCUG 17765 / NCTC 10094 / 16M)).